The primary structure comprises 531 residues: Ceramide kinase (531 aa).

Positions 1–115 (MGAMGAAEPL…SADEQLCHLW (115 aa)) are essential for enzyme activity. Residues 1–125 (MGAMGAAEPL…LQTLRGLLES (125 aa)) are required for binding to sulfatide and phosphoinositides. Residues 128–278 (SRPKHLLVFI…IDVSSVHYHN (151 aa)) form the DAGKc domain. ATP-binding positions include 138–140 (NPF) and 170–174 (TEHAN). 195–198 (GGDG) is a binding site for substrate. Residue D197 is the Proton donor/acceptor of the active site. Residues E202, 239 to 241 (GST), R304, and R310 each bind ATP. 2 positions are modified to phosphoserine: S340 and S408. Residue 502–504 (DGE) participates in ATP binding.

The cofactor is Ca(2+). Requires Mg(2+) as cofactor. In terms of tissue distribution, high level expression in heart, brain, testis and pancreas; low expression in spleen, liver and lung; not detected in skeletal muscle.

It localises to the cytoplasm. Its subcellular location is the cell membrane. It carries out the reaction an N-acylsphing-4-enine + ATP = an N-acylsphing-4-enine 1-phosphate + ADP + H(+). It catalyses the reaction N-(hexanoyl)sphing-4-enine + ATP = N-hexanoylsphing-4-enine 1-phosphate + ADP + H(+). The catalysed reaction is N-(acetyl)-sphing-4-enine + ATP = N-(acetyl)-sphing-4-enine-1-phosphate + ADP + H(+). The enzyme catalyses N-hexadecanoylsphing-4-enine + ATP = N-(hexadecanoyl)-sphing-4-enine-1-phosphate + ADP + H(+). It carries out the reaction N-hexanoyl-(4R)-hydroxysphinganine + ATP = N-hexanoyl-(4R)-hydroxysphinganine-1-phosphate + ADP + H(+). Its function is as follows. Catalyzes specifically the phosphorylation of ceramide to form ceramide 1-phosphate. Acts efficiently on natural and analog ceramides (C6, C8, C16 ceramides, and C8-dihydroceramide), to a lesser extent on C2-ceramide and C6-dihydroceramide, but not on other lipids, such as various sphingosines. Shows a greater preference for D-erythro isomer of ceramides. Binds phosphoinositides. The polypeptide is Ceramide kinase (Cerk) (Mus musculus (Mouse)).